Reading from the N-terminus, the 276-residue chain is Glucosamine-6-phosphate deaminase 2 (276 aa).

Asp72 serves as the catalytic Proton acceptor; for enolization step. Residues His105–Gly130 are a coiled coil. Asp141 serves as the catalytic For ring-opening step. The active-site Proton acceptor; for ring-opening step is His143. Glu148 (for ring-opening step) is an active-site residue. Thr161 carries the post-translational modification Phosphothreonine.

The protein belongs to the glucosamine/galactosamine-6-phosphate isomerase family. As to quaternary structure, homohexamer. As to expression, ubiquitous, with highest expression detected in testis, ovary, placenta, and heart.

The protein localises to the cytoplasm. The catalysed reaction is alpha-D-glucosamine 6-phosphate + H2O = beta-D-fructose 6-phosphate + NH4(+). It functions in the pathway nucleotide-sugar biosynthesis; UDP-N-acetyl-alpha-D-glucosamine biosynthesis; alpha-D-glucosamine 6-phosphate from D-fructose 6-phosphate: step 1/1. Allosterically activated by N-acetylglucosamine-6-phosphate (GlcNAc6P). Its function is as follows. Catalyzes the reversible conversion of alpha-D-glucosamine 6-phosphate (GlcN-6P) into beta-D-fructose 6-phosphate (Fru-6P) and ammonium ion, a regulatory reaction step in de novo uridine diphosphate-N-acetyl-alpha-D-glucosamine (UDP-GlcNAc) biosynthesis via hexosamine pathway. Deamination is coupled to aldo-keto isomerization mediating the metabolic flux from UDP-GlcNAc toward Fru-6P. At high ammonium level can drive amination and isomerization of Fru-6P toward hexosamines and UDP-GlcNAc synthesis. Has a role in fine tuning the metabolic fluctuations of cytosolic UDP-GlcNAc and their effects on hyaluronan synthesis that occur during tissue remodeling. In Homo sapiens (Human), this protein is Glucosamine-6-phosphate deaminase 2.